The primary structure comprises 819 residues: Zinc finger protein 658B (819 aa).

The C2H2-type 1; degenerate zinc-finger motif lies at 141–166; that stretch reads YLSDEHGKCRKSFYWKAHLIQHERPH. C2H2-type zinc fingers lie at residues 200–222, 278–300, 306–328, 334–356, 362–384, 390–412, 418–440, 446–468, 474–496, 502–524, 530–552, 558–580, 586–608, and 614–636; these read YECNECGKAFCQNSNLSKHLRIH, YECIECGKTFSKTSHLRAHQRIH, YECVECEKTFSHKTHLSVHQRVH, YECNDCGKSFTYNSALRAHQRIH, YECSDCEKTFAHNSALRAHHRIH, YECNECGRSFAHISVLKAHQRIH, YECNECGRSFTYNSALRAHQRIH, YECSDCEKTFAHNSALKIHQRIH, YKCNECEKTFAHNSALRAHQNIH, YECSECGKTFFQKTRLSTHRRIH, YECSKCGKTFSQKSYLSGHERIH, YECNVCGKTFVYKAALIVHQRIH, YECNECGKTFSQRTHLCAHQRIH, and YECNECGKTFADNSALRAHHRIH. A C2H2-type 16; degenerate zinc finger spans residues 642–664; that stretch reads YECNDCGKTFSKTSHLRAHLRTR. 5 consecutive C2H2-type zinc fingers follow at residues 670–692, 698–720, 726–748, 754–776, and 782–805; these read YECSECGKTFSEKSYVSAHQRVH, YECNVCGKPFAHNSTLRVHQRIH, YECNDCGKTFSQKSHLSAHQRIH, YECNECGKAFAQNSTLRVHQRIH, and YECDECGKTFVRKAALRVHHTRMH.

It belongs to the krueppel C2H2-type zinc-finger protein family.

The protein resides in the nucleus. In terms of biological role, may be involved in transcriptional regulation. The protein is Zinc finger protein 658B (ZNF658B) of Homo sapiens (Human).